We begin with the raw amino-acid sequence, 267 residues long: GTP cyclohydrolase FolE2 (267 aa).

The protein belongs to the GTP cyclohydrolase IV family.

The enzyme catalyses GTP + H2O = 7,8-dihydroneopterin 3'-triphosphate + formate + H(+). It participates in cofactor biosynthesis; 7,8-dihydroneopterin triphosphate biosynthesis; 7,8-dihydroneopterin triphosphate from GTP: step 1/1. Converts GTP to 7,8-dihydroneopterin triphosphate. The chain is GTP cyclohydrolase FolE2 from Citrifermentans bemidjiense (strain ATCC BAA-1014 / DSM 16622 / JCM 12645 / Bem) (Geobacter bemidjiensis).